Here is a 263-residue protein sequence, read N- to C-terminus: Rano class II histocompatibility antigen, B-1 beta chain (263 aa).

The signal sequence occupies residues 1–27 (MALQTPSFLLPAAVVVLMVLSSPGTEG). The beta-1 stretch occupies residues 28 to 120 (RDSPRDFVYQ…SEVRTSLRRL (93 aa)). The Extracellular portion of the chain corresponds to 28–224 (RDSPRDFVYQ…RAQSESAQSK (197 aa)). 2 cysteine pairs are disulfide-bonded: Cys42/Cys104 and Cys143/Cys199. A glycan (N-linked (GlcNAc...) asparagine) is linked at Asn46. Positions 121 to 214 (EQPNVAISLS…SLESPVTVEW (94 aa)) are beta-2. The 89-residue stretch at 123–211 (PNVAISLSRT…DHPSLESPVT (89 aa)) folds into the Ig-like C1-type domain. A connecting peptide region spans residues 215–224 (RAQSESAQSK). The helical transmembrane segment at 225-245 (MLSGIGGFVLGVIFLGLGLFI) threads the bilayer. Residues 246–263 (RHKRQKGPRGPPPAGLLQ) are Cytoplasmic-facing. Residue Lys251 forms a Glycyl lysine isopeptide (Lys-Gly) (interchain with G-Cter in ubiquitin) linkage.

The protein belongs to the MHC class II family.

The protein resides in the membrane. Its function is as follows. Involved in the presentation of foreign antigens to the immune system. The polypeptide is Rano class II histocompatibility antigen, B-1 beta chain (RT1-Bb) (Rattus norvegicus (Rat)).